The primary structure comprises 121 residues: Small ribosomal subunit protein uS13 (121 aa).

Residues 94 to 121 (GLPVRGQNTKNNARTRKGPRRTVANKKK) are disordered. A compositionally biased stretch (basic residues) spans 106–121 (ARTRKGPRRTVANKKK).

The protein belongs to the universal ribosomal protein uS13 family. As to quaternary structure, part of the 30S ribosomal subunit. Forms a loose heterodimer with protein S19. Forms two bridges to the 50S subunit in the 70S ribosome.

In terms of biological role, located at the top of the head of the 30S subunit, it contacts several helices of the 16S rRNA. In the 70S ribosome it contacts the 23S rRNA (bridge B1a) and protein L5 of the 50S subunit (bridge B1b), connecting the 2 subunits; these bridges are implicated in subunit movement. Contacts the tRNAs in the A and P-sites. The chain is Small ribosomal subunit protein uS13 from Geobacillus sp. (strain WCH70).